The chain runs to 501 residues: L-arabinose isomerase (501 aa).

The Mn(2+) site is built by glutamate 306, glutamate 333, histidine 350, and histidine 449.

Belongs to the arabinose isomerase family. Requires Mn(2+) as cofactor.

The catalysed reaction is beta-L-arabinopyranose = L-ribulose. It participates in carbohydrate degradation; L-arabinose degradation via L-ribulose; D-xylulose 5-phosphate from L-arabinose (bacterial route): step 1/3. Functionally, catalyzes the conversion of L-arabinose to L-ribulose. The sequence is that of L-arabinose isomerase from Herpetosiphon aurantiacus (strain ATCC 23779 / DSM 785 / 114-95).